The chain runs to 485 residues: UDP-N-acetylmuramate--L-alanine ligase (485 aa).

Residue 127-133 (GTHGKTT) coordinates ATP.

The protein belongs to the MurCDEF family.

It localises to the cytoplasm. It catalyses the reaction UDP-N-acetyl-alpha-D-muramate + L-alanine + ATP = UDP-N-acetyl-alpha-D-muramoyl-L-alanine + ADP + phosphate + H(+). The protein operates within cell wall biogenesis; peptidoglycan biosynthesis. Cell wall formation. The polypeptide is UDP-N-acetylmuramate--L-alanine ligase (Shewanella frigidimarina (strain NCIMB 400)).